A 484-amino-acid polypeptide reads, in one-letter code: Hexokinase-1 (484 aa).

The 441-residue stretch at 25 to 465 (KTLQDHLDEL…SGVGAALVSA (441 aa)) folds into the Hexokinase domain. Residues 79-212 (DGNEHGSYLA…CNNVRLNAIL (134 aa)) form a hexokinase small subdomain region. 90–95 (DLGGTN) is an ATP binding site. Residues 160 to 161 (SY), 177 to 178 (TK), and 213 to 214 (SD) each bind substrate. The interval 213-454 (SDTTGTLVAS…SKVVTIPAED (242 aa)) is hexokinase large subdomain. Thr-237 is a binding site for ATP. Asn-240, Glu-269, and Glu-302 together coordinate substrate. Residues 307–308 (GC), 344–348 (TSVLS), and 419–423 (SVYNL) each bind ATP.

The protein belongs to the hexokinase family. As to quaternary structure, monomer.

The catalysed reaction is a D-hexose + ATP = a D-hexose 6-phosphate + ADP + H(+). The enzyme catalyses D-mannose + ATP = D-mannose 6-phosphate + ADP + H(+). It catalyses the reaction D-fructose + ATP = D-fructose 6-phosphate + ADP + H(+). It carries out the reaction D-glucose + ATP = D-glucose 6-phosphate + ADP + H(+). It functions in the pathway carbohydrate metabolism; hexose metabolism. The protein operates within carbohydrate degradation; glycolysis; D-glyceraldehyde 3-phosphate and glycerone phosphate from D-glucose: step 1/4. Functionally, catalyzes the phosphorylation of hexose (six-carbon sugars) to hexose 6-phosphate. Phosphorylates D-fructose, D-mannose and, to a lower extent, D-glucose. Compared to hxk2, has low affinity for D-glucose. This chain is Hexokinase-1, found in Schizosaccharomyces pombe (strain 972 / ATCC 24843) (Fission yeast).